The chain runs to 496 residues: Glycerol kinase (496 aa).

Thr-11 lines the ADP pocket. Positions 11, 12, and 13 each coordinate ATP. Residue Thr-11 participates in sn-glycerol 3-phosphate binding. Arg-15 contributes to the ADP binding site. Arg-81, Glu-82, Tyr-133, and Asp-242 together coordinate sn-glycerol 3-phosphate. Positions 81, 82, 133, 242, and 243 each coordinate glycerol. ADP is bound by residues Thr-264 and Gly-307. ATP-binding residues include Thr-264, Gly-307, Gln-311, and Gly-408. ADP is bound by residues Gly-408 and Asn-412.

Belongs to the FGGY kinase family.

It catalyses the reaction glycerol + ATP = sn-glycerol 3-phosphate + ADP + H(+). The protein operates within polyol metabolism; glycerol degradation via glycerol kinase pathway; sn-glycerol 3-phosphate from glycerol: step 1/1. Its activity is regulated as follows. Inhibited by fructose 1,6-bisphosphate (FBP). Its function is as follows. Key enzyme in the regulation of glycerol uptake and metabolism. Catalyzes the phosphorylation of glycerol to yield sn-glycerol 3-phosphate. This Trichlorobacter lovleyi (strain ATCC BAA-1151 / DSM 17278 / SZ) (Geobacter lovleyi) protein is Glycerol kinase.